The primary structure comprises 211 residues: Thymidylate kinase (211 aa).

Position 7 to 14 (7 to 14) interacts with ATP; the sequence is GIDASGKS.

This sequence belongs to the thymidylate kinase family.

The enzyme catalyses dTMP + ATP = dTDP + ADP. Functionally, phosphorylation of dTMP to form dTDP in both de novo and salvage pathways of dTTP synthesis. This chain is Thymidylate kinase, found in Mesomycoplasma hyopneumoniae (strain 7448) (Mycoplasma hyopneumoniae).